A 224-amino-acid chain; its full sequence is Iron-sulfur cluster repair protein ScdA (224 aa).

It belongs to the RIC family. ScdA subfamily. Homodimer.

It is found in the cytoplasm. In terms of biological role, di-iron-containing protein involved in the repair of iron-sulfur clusters damaged by oxidative and nitrosative stress conditions. This chain is Iron-sulfur cluster repair protein ScdA, found in Staphylococcus epidermidis (strain ATCC 35984 / DSM 28319 / BCRC 17069 / CCUG 31568 / BM 3577 / RP62A).